Consider the following 195-residue polypeptide: Cbp/p300-interacting transactivator 1 (195 aa).

2 disordered regions span residues 1-24 (MPTM…NANP) and 51-149 (ASNG…SPAI). Over residues 54 to 78 (GTKASGAPTSSSGSPSPISSSTATP) the composition is skewed to low complexity. A compositionally biased stretch (polar residues) spans 97–106 (MQLQKLNSQY). The span at 137–148 (SLSPSAGAQSPA) shows a compositional bias: low complexity. A Nuclear export signal motif is present at residues 160–169 (LMSLVVELGL).

This sequence belongs to the CITED family. Interacts (via C-terminus) with CREBBP. Interacts with EGR2. Homodimer. Binds to RBM14. Interacts (via N-terminus) with HSPA8; the interaction suppresses the association of CITED1 with p300/CBP and SMAD-mediated transcription transactivation. Interacts (via C-terminus) with TOX3 (via HGM box); the interaction increases estrogen-response element (ERE)-dependent transcription and protection against cell death. Interacts with ESR1; the interaction occurs in a estrogen-dependent manner. Interacts (unphosphorylated form preferentially and via C-terminus) with EP300. In terms of processing, phosphorylated. Phosphorylation changes in a cell cycle-dependent manner and reduces its transcriptional cofactor activity.

Its subcellular location is the nucleus. It is found in the cytoplasm. Its function is as follows. Transcriptional coactivator of the p300/CBP-mediated transcription complex. Enhances SMAD-mediated transcription by strengthening the functional link between the DNA-binding SMAD transcription factors and the p300/CBP transcription coactivator complex. Stimulates estrogen-dependent transactivation activity mediated by estrogen receptors signaling; stabilizes the interaction of estrogen receptor ESR1 and histone acetyltransferase EP300. Positively regulates TGF-beta signaling through its association with the SMAD/p300/CBP-mediated transcriptional coactivator complex. Induces transcription from estrogen-responsive promoters and protection against cell death. Potentiates EGR2-mediated transcriptional activation activity from the ERBB2 promoter. Acts as an inhibitor of osteoblastic mineralization through a cAMP-dependent parathyroid hormone receptor signaling. May play a role in pigmentation of melanocytes. Associates with chromatin to the estrogen-responsive TGF-alpha promoter region in a estrogen-dependent manner. The protein is Cbp/p300-interacting transactivator 1 (CITED1) of Bos taurus (Bovine).